The chain runs to 173 residues: dCTP deaminase, dUMP-forming (173 aa).

DCTP-binding positions include 93-98, D111, 119-121, and Q138; these read RSSIGR and TLE. E121 acts as the Proton donor/acceptor in catalysis.

The protein belongs to the dCTP deaminase family. As to quaternary structure, homotrimer.

It carries out the reaction dCTP + 2 H2O = dUMP + NH4(+) + diphosphate. The protein operates within pyrimidine metabolism; dUMP biosynthesis; dUMP from dCTP: step 1/1. In terms of biological role, bifunctional enzyme that catalyzes both the deamination of dCTP to dUTP and the hydrolysis of dUTP to dUMP without releasing the toxic dUTP intermediate. The protein is dCTP deaminase, dUMP-forming of Leptospira borgpetersenii serovar Hardjo-bovis (strain JB197).